We begin with the raw amino-acid sequence, 62 residues long: UPF0291 protein CLI_2672 (62 aa).

Belongs to the UPF0291 family.

The protein localises to the cytoplasm. The polypeptide is UPF0291 protein CLI_2672 (Clostridium botulinum (strain Langeland / NCTC 10281 / Type F)).